A 351-amino-acid chain; its full sequence is ATP-dependent 6-phosphofructokinase subunit gamma (351 aa).

In terms of assembly, heterododecamer of 4 alpha, 4 beta and 4 gamma chains. The gamma chain bridges the N-terminal halves of the alpha and beta subunits.

It is found in the cytoplasm. It functions in the pathway carbohydrate degradation; glycolysis; D-glyceraldehyde 3-phosphate and glycerone phosphate from D-glucose: step 3/4. Structural subunit of pyrophosphate--fructose 6-phosphate 1-phosphotransferase. Not required for catalytic activity. Fine-tunes allosteric regulation of the ATP-PFK by ATP, fructose 2,6-bisphosphate and AMP. This chain is ATP-dependent 6-phosphofructokinase subunit gamma (PFK3), found in Komagataella pastoris (Yeast).